We begin with the raw amino-acid sequence, 317 residues long: UV DNA damage endonuclease (317 aa).

The protein belongs to the uve1/UvsE family.

Functionally, component in a DNA repair pathway. Removal of UV LIGHT damaged nucleotides. Recognizes pyrimidine dimers and cleave a phosphodiester bond immediately 5' to the lesion. The polypeptide is UV DNA damage endonuclease (Bacillus thuringiensis subsp. konkukian (strain 97-27)).